The sequence spans 235 residues: Purine nucleoside phosphorylase DeoD-type (235 aa).

Residue histidine 4 participates in a purine D-ribonucleoside binding. Residues glycine 20, arginine 24, arginine 43, and arginine 87–threonine 90 each bind phosphate. A purine D-ribonucleoside is bound by residues glutamate 162, glutamate 179–glutamate 181, and serine 203–aspartate 204. Residue aspartate 204 is the Proton donor of the active site.

It belongs to the PNP/UDP phosphorylase family. In terms of assembly, homohexamer; trimer of homodimers.

It catalyses the reaction a purine D-ribonucleoside + phosphate = a purine nucleobase + alpha-D-ribose 1-phosphate. The enzyme catalyses a purine 2'-deoxy-D-ribonucleoside + phosphate = a purine nucleobase + 2-deoxy-alpha-D-ribose 1-phosphate. Catalyzes the reversible phosphorolytic breakdown of the N-glycosidic bond in the beta-(deoxy)ribonucleoside molecules, with the formation of the corresponding free purine bases and pentose-1-phosphate. This Bacillus cytotoxicus (strain DSM 22905 / CIP 110041 / 391-98 / NVH 391-98) protein is Purine nucleoside phosphorylase DeoD-type.